We begin with the raw amino-acid sequence, 445 residues long: MSRDPTGVGARWAIMIVSLGVTASSFLFINGVAFLIPRLENARGTPLSHAGLLASMPSWGLVVTMFAWGYLLDHVGERMVMAVGSALTAAAAYAAASVHSLLWIGVFLFLGGMAAGGCNSAGGRLVSGWFPPQQRGLAMGIRQTAQPLGIASGALVIPELAERGVHAGLMFPAVVCTLAAVASVLGIVDPPRKSRTKASEQELASPYRGSSILWRIHAASALLMMPQTVTVTFMLVWLINHHGWSVAQAGVLVTISQLLGALGRVAVGRWSDHVGSRMRPVRLIAAAAAATLFLLAAVDNEGSRYDVLLMIAISVIAVLDNGLEATAITEYAGPYWSGRALGIQNTTQRLMAAAGPPLFGSLITTAAYPTAWALCGVFPLAAVPLVPVRLLPPGLETRARRQSVRRHRWWQAVRCHAWPNGPRRPGPPGQPRRVRQGGTAITPPT.

The next 8 membrane-spanning stretches (helical) occupy residues isoleucine 16–isoleucine 36, leucine 52–leucine 72, valine 98–cysteine 118, glycine 168–valine 188, alanine 219–isoleucine 239, glycine 243–glycine 263, leucine 283–serine 303, and alanine 366–valine 386. Positions alanine 417–threonine 445 are disordered.

Belongs to the major facilitator superfamily.

It is found in the cell membrane. This is an uncharacterized protein from Mycobacterium tuberculosis (strain ATCC 25618 / H37Rv).